The sequence spans 940 residues: Translation initiation factor IF-2 (940 aa).

Disordered regions lie at residues E48–K264 and Q278–K351. Composition is skewed to basic and acidic residues over residues S65 to V95, F112 to A125, N155 to A206, R232 to E258, and A292 to N301. The segment covering N314–N332 has biased composition (low complexity). A tr-type G domain is found at E442 to E609. The G1 stretch occupies residues G451–T458. Position 451–458 (G451–T458) interacts with GTP. Positions G476–H480 are G2. The tract at residues D497–G500 is G3. GTP-binding positions include D497–H501 and N551–D554. A G4 region spans residues N551–D554. The tract at residues S587 to K589 is G5.

Belongs to the TRAFAC class translation factor GTPase superfamily. Classic translation factor GTPase family. IF-2 subfamily.

It localises to the cytoplasm. Functionally, one of the essential components for the initiation of protein synthesis. Protects formylmethionyl-tRNA from spontaneous hydrolysis and promotes its binding to the 30S ribosomal subunits. Also involved in the hydrolysis of GTP during the formation of the 70S ribosomal complex. In Streptococcus suis (strain 98HAH33), this protein is Translation initiation factor IF-2.